Consider the following 260-residue polypeptide: Histidine-binding periplasmic protein (260 aa).

Positions 1–22 are cleaved as a signal peptide; sequence MKKLVLSLSLVLAFSSATAAFA. A disulfide bond links Cys-60 and Cys-67. The L-histidine site is built by Ser-91, Ser-92, Ser-94, Arg-99, Thr-143, and Asp-183.

This sequence belongs to the bacterial solute-binding protein 3 family. As to quaternary structure, the complex is composed of two ATP-binding proteins (HisP), two transmembrane proteins (HisM and HisQ) and a solute-binding protein (HisJ).

It is found in the periplasm. Its function is as follows. Part of the ABC transporter complex HisPMQJ involved in histidine transport. Binds histidine. Interacts with HisQMP and stimulates ATPase activity of HisP, which results in histidine translocation. In Escherichia coli O157:H7, this protein is Histidine-binding periplasmic protein (hisJ).